Reading from the N-terminus, the 300-residue chain is Cutinase est2 (300 aa).

The signal sequence occupies residues 1–39 (MSVTTPRRETSLLSRALRATAAAATAVVATVALAAPAQA). Tyr99 is a poly(ethylene terephthalate) binding site. Ser169 acts as the Nucleophile in catalysis. 2 residues coordinate poly(ethylene terephthalate): Met170 and Trp194. Glu213 serves as a coordination point for Ca(2+). Asp215 functions as the Charge relay system in the catalytic mechanism. Residue Asp243 coordinates Ca(2+). The active-site Charge relay system is His247. The cysteines at positions 280 and 298 are disulfide-linked. Glu292 is a binding site for Ca(2+).

Belongs to the AB hydrolase superfamily. Monomer. Ca(2+) is required as a cofactor.

Its subcellular location is the secreted. It is found in the periplasm. The catalysed reaction is an acetyl ester + H2O = an aliphatic alcohol + acetate + H(+). It carries out the reaction (ethylene terephthalate)(n) + H2O = (ethylene terephthalate)(n-1) + 4-[(2-hydroxyethoxy)carbonyl]benzoate + H(+). The enzyme catalyses a butanoate ester + H2O = an aliphatic alcohol + butanoate + H(+). It catalyses the reaction cutin + H2O = cutin monomers.. The catalysed reaction is a hexanoate ester + H2O = an aliphatic alcohol + hexanoate + H(+). It carries out the reaction an octanoate ester + H2O = an aliphatic alcohol + octanoate + H(+). With respect to regulation, activated by calcium ions. Activated by magnesium ions. Activated by manganese ions. Inhibited by the serine hydrolase inhibitor phenylmethanesulfonyl fluoride (PMSF). Inhibited by the chelator ethylenediaminetetraacetic acid (EDTA). Inhibited by iron ions. Inhibited by aluminum ions. Inhibited by rubidium ions. Inhibited by lithium ions. Functionally, catalyzes the hydrolysis of cutin, a polyester that forms the structure of plant cuticle. Shows esterase activity towards p-nitrophenol-linked aliphatic esters (pNP-aliphatic esters). Capable of degrading the plastic poly(ethylene terephthalate) (PET), the most abundant polyester plastic in the world. Can also depolymerize the synthetic polyesters poly(epsilon-caprolactone) (PCL), poly(butylene succinate-co-adipate) (PBSA), poly(butylene succinate) (PBS), and poly(lactic acid) (PLA). This chain is Cutinase est2, found in Thermobifida alba (Thermomonospora alba).